Reading from the N-terminus, the 1513-residue chain is Mucin-2 (1513 aa).

The signal sequence occupies residues 1–20 (MGLPLARLVAVCLVLALAKG). The 173-residue stretch at 32-204 (HVCSTWGDFH…KINKPEVVCE (173 aa)) folds into the VWFD 1 domain. Intrachain disulfides connect Cys-34/Cys-166, Cys-56/Cys-203, Cys-64/Cys-163, Cys-215/Cys-252, Cys-222/Cys-247, Cys-234/Cys-272, Cys-254/Cys-260, Cys-262/Cys-288, Cys-292/Cys-326, Cys-309/Cys-348, Cys-328/Cys-342, Cys-350/Cys-372, Cys-367/Cys-384, Cys-370/Cys-379, Cys-388/Cys-525, Cys-410/Cys-560, Cys-432/Cys-440, Cys-571/Cys-616, Cys-585/Cys-611, Cys-598/Cys-636, Cys-618/Cys-624, Cys-626/Cys-651, Cys-658/Cys-695, Cys-671/Cys-685, Cys-675/Cys-715, Cys-697/Cys-709, Cys-717/Cys-739, and Cys-737/Cys-746. Residue Asp-46 participates in Ca(2+) binding. Met-143 and Met-151 together coordinate Cu(+). Glu-153 is a Cu(2+) binding site. Asn-160 is a glycosylation site (N-linked (GlcNAc...) asparagine). Asp-168, Asn-170, and Glu-177 together coordinate Ca(2+). 2 residues coordinate Cu(2+): His-274 and His-321. Residues 292-348 (CPGNMVYLESGSPWLDTCSHLEVSSLCEEHYMDGCFCPEGTVYDDITGSGCIPVSQC) enclose the TIL domain. Cu(+) is bound at residue Met-323. The VWFC domain occupies 350-410 (CKLHGHLYMP…GKKFTFHGDC (61 aa)). Positions 386 to 561 (ETCALEGGSH…NTWKAQSSCH (176 aa)) constitute a VWFD 2 domain. Position 400 (Asp-400) interacts with Ca(2+). Residue Asn-420 is glycosylated (N-linked (GlcNAc...) asparagine). Ca(2+)-binding residues include Asn-527, Asn-529, Leu-531, Asp-534, and Asp-535. N-linked (GlcNAc...) asparagine glycosylation is present at Asn-667. Asn-767 carries N-linked (GlcNAc...) asparagine glycosylation. 21 disulfide bridges follow: Cys-781–Cys-817, Cys-799–Cys-811, Cys-819–Cys-842, Cys-836–Cys-854, Cys-840–Cys-849, Cys-858–Cys-989, Cys-880–Cys-1024, Cys-889–Cys-986, Cys-906–Cys-913, Cys-1034–Cys-1077, Cys-1048–Cys-1072, Cys-1059–Cys-1099, Cys-1079–Cys-1087, Cys-1089–Cys-1114, Cys-1105–Cys-1134, Cys-1118–Cys-1160, Cys-1142–Cys-1184, Cys-1164–Cys-1178, Cys-1186–Cys-1210, Cys-1205–Cys-1235, and Cys-1208–Cys-1218. An N-linked (GlcNAc...) asparagine glycan is attached at Asn-837. One can recognise a VWFD 3 domain in the interval 856 to 1025 (STCSIYGSGH…NSWKEASTCP (170 aa)). Ca(2+) is bound at residue Asp-870. Asn-892 carries an N-linked (GlcNAc...) asparagine glycan. Ca(2+) contacts are provided by Asn-991, Asp-993, Asn-998, and Asp-999. N-linked (GlcNAc...) asparagine glycans are attached at residues Asn-1136 and Asn-1151. N-linked (GlcNAc...) asparagine glycosylation is found at Asn-1212, Asn-1227, and Asn-1243. Thr-1264, Thr-1267, Thr-1268, and Thr-1280 each carry an O-linked (GalNAc) threonine glycan. A glycan (O-linked (GalNAc) serine) is linked at Ser-1286. Thr-1290 carries an O-linked (GalNAc) threonine glycan. Residues Asn-1303, His-1306, Ser-1309, Gly-1313, Asp-1314, and Glu-1316 each coordinate Ca(2+). Asn-1350 carries an N-linked (GlcNAc...) asparagine glycan. Residues Asp-1373 and Tyr-1374 each contribute to the Ca(2+) site. 11 repeat units span residues 1392–1407 (SPTT…QPTS), 1408–1423 (SPTT…SSAT), 1424–1434 (SPTTSHITSTV), 1435–1445 (SPTTSPTTSTT), 1446–1456 (SPTTSPTTSTT), 1457–1467 (SPTTSTTSPTP), 1468–1478 (SPTTSTTSPTP), 1479–1489 (SPTTSTTSPTP), 1490–1500 (SPTTSTTSPTT), 1501–1511 (SPITSPTTSTT), and 1512–1513 (SP). The approximate repeats stretch occupies residues 1392–1513 (SPTTSTPISS…TSPTTSTTSP (122 aa)). The segment at 1392 to 1513 (SPTTSTPISS…TSPTTSTTSP (122 aa)) is disordered.

Homomultimer; disulfide-linked. The N- and C-terminus mediate their assembly into higher order structures to form filaments. The CTCK domains of two polypeptides associate in the endoplasmic reticulum to generate intermolecularly disulfide-bonded dimers. These dimers progress to the Golgi apparatus, which is a more acidic environment than the endoplasmic reticulum. Under acidic conditions, the N-termini form non-covalent intermolecular interactions that juxtapose assemblies of the third VWD domain (VWD3) from different CTCK-linked dimers. The VWD3 assemblies then become disulfide bonded to one another to produce long, disulfide-linked polymers that remain highly compact until secretion. Interacts with FCGBP. Interacts with AGR2; disulfide-linked. O-glycosylated. O-glycosylation is required for mucin assembly. Goblet cells synthesize two forms of mucin that differ in branched chain O-glycosylation and the site of production in the colon. Post-translationally, may undergo proteolytic cleavage in the outer mucus layer of the colon, contributing to the expanded volume and loose nature of this layer which allows for bacterial colonization in contrast to the inner mucus layer which is dense and devoid of bacteria. In terms of processing, at low pH of 6 and under, undergoes autocatalytic cleavage in vitro in the N-terminal region of the fourth VWD domain. It is likely that this also occurs in vivo and is triggered by the low pH of the late secretory pathway. In terms of tissue distribution, expressed in intestine and airway.

It localises to the secreted. Coats the epithelia of the intestines and other mucus membrane-containing organs to provide a protective, lubricating barrier against particles and infectious agents at mucosal surfaces. Major constituent of the colon mucus, which is mainly formed by large polymeric networks of MUC2 secreted by goblet cells that cover the exposed surfaces of intestine. MUC2 networks form hydrogels that guard the underlying epithelium from pathogens and other hazardous matter entering from the outside world, while permitting nutrient absorption and gas exchange. Acts as a divalent copper chaperone that protects intestinal cells from copper toxicity and facilitates nutritional copper unptake into cells. Binds both Cu(2+) and its reduced form, Cu(1+), at two juxtaposed binding sites: Cu(2+), once reduced to Cu(1+) by vitamin C (ascorbate) or other dietary antioxidants, transits to the other binding site. MUC2-bound Cu(1+) is protected from oxidation in aerobic environments, and can be released for nutritional delivery to cells. Mucin gels store antimicrobial molecules that participate in innate immunity. Mucin glycoproteins also house and feed the microbiome, lubricate tissue surfaces, and may facilitate the removal of contaminants and waste products from the body. Goblet cells synthesize two forms of MUC2 mucin that differ in branched chain O-glycosylation and the site of production in the colon: a (1) 'thick' mucus that wraps the microbiota to form fecal pellets is produced in the proximal, ascending colon. 'Thick' mucus transits along the descending colon and is lubricated by a (2) 'thin' MUC2 mucus produced in the distal colon which adheres to the 'thick' mucus. This is Mucin-2 from Rattus norvegicus (Rat).